The sequence spans 648 residues: Sodium/nucleoside cotransporter 1 (648 aa).

Over 1-80 (MADNTQRQRE…ARSFCREHRQ (80 aa)) the chain is Cytoplasmic. Residues 81–104 (LFGWICKGLLSTACLGFLMVACLL) traverse the membrane as a helical segment. The Extracellular segment spans residues 105–109 (DLQRA). Residues 110-128 (LALLIITCVVLVFLAYDLL) traverse the membrane as a helical segment. Residues 129-147 (KRLLGSKLRRCVKFQGHSC) are Cytoplasmic-facing. A helical membrane pass occupies residues 148-167 (LSLWLKRGLALAAGVGLILW). Residues 168-178 (LSLDTAQRPEQ) lie on the Extracellular side of the membrane. Residues 179–195 (LVSFAGICVFLVLLFAG) traverse the membrane as a helical segment. Residues 196–201 (SKHHRA) are Cytoplasmic-facing. A helical transmembrane segment spans residues 202–222 (VSWRAVSWGLGLQFVLGLFVI). Residues 223–261 (RTEPGFIAFQWLGDQIQVFLSYTEAGSSFVFGEALVKDV) lie on the Extracellular side of the membrane. Residues 262–283 (FAFQVLPIIIFFSCVMSVLYYL) form a helical membrane-spanning segment. At 284–294 (GLMQWVILKIA) the chain is on the cytoplasmic side. Residues 295-318 (WLMQVTMGTSATETLSVAGNIFVS) form a helical membrane-spanning segment. Topologically, residues 319-337 (QTEAPLLIRPYLADMTLSE) are extracellular. A helical transmembrane segment spans residues 338–360 (VHVVMTGGYATIAGSLLGAYISF). The Cytoplasmic segment spans residues 361–366 (GIDAAS). Residues 367–386 (LIAASVMAAPCALALSKLVY) form a helical membrane-spanning segment. Residues 387 to 423 (PEVEESKFRSENGVKLTYGDAQNLLEAASAGAAISVK) lie on the Extracellular side of the membrane. A helical membrane pass occupies residues 424-446 (VVANIAANLIAFLAVLAFVNAAL). Over 447–457 (SWLGDMVDIQG) the chain is Cytoplasmic. The helical transmembrane segment at 458-479 (LSFQLICSYVLRPVAFLMGVAW) threads the bilayer. At 480-534 (EDCPVVAELLGIKFFLNEFVAYQELSQYKQRRLAGAEEWLGDKKQWISVRAEILT) the chain is on the extracellular side. The chain crosses the membrane as a helical span at residues 535-558 (TYALCGFANFSSIGIMLGGLTSLV). At 559-569 (PQRRSDFSQIV) the chain is on the cytoplasmic side. The chain crosses the membrane as a helical span at residues 570–592 (LRALITGAFVSLLNACVAGILYV). The Extracellular portion of the chain corresponds to 593–648 (PRGVEVDCVSLLNQTVSSSSFEVYLCCRQVFQSTSSEFSQVALDNCCRFYNHTVCT). 2 N-linked (GlcNAc...) asparagine glycosylation sites follow: asparagine 605 and asparagine 643.

Belongs to the concentrative nucleoside transporter (CNT) (TC 2.A.41) family. Post-translationally, N-glycosylated. N-glycosylation is required for localization to the plasma membrane and the transporter activity. As to expression, expressed predominantly in the brush-border membranes of the polarized epithelial cells of jejunum and renal cortical tubules and in the bile canalicular membranes of liver parenchymal cells.

It localises to the cell membrane. It is found in the apical cell membrane. The enzyme catalyses uridine(out) + Na(+)(out) = uridine(in) + Na(+)(in). It catalyses the reaction thymidine(out) + Na(+)(out) = thymidine(in) + Na(+)(in). It carries out the reaction cytidine(out) + Na(+)(out) = cytidine(in) + Na(+)(in). The catalysed reaction is adenosine(out) + Na(+)(out) = adenosine(in) + Na(+)(in). Its activity is regulated as follows. Due to its high apparent affinity but slow transport, adenosine could act as a negative regulator of pyrimidine transport under some conditions. In terms of biological role, sodium and pyrimidine nucleoside symporter of the plasma membrane that imports uridine, thymidine and cytidine into cells by coupling their transport to the transmembrane sodium electrochemical gradient. Also transports adenosine, an atypical substrate transported with high apparent affinity, but low maximum velocity. Therefore, exhibits the transport characteristics of the nucleoside transport system cit or N2 subtype (N2/cit). Involved in renal nucleoside (re)absorption. The sequence is that of Sodium/nucleoside cotransporter 1 from Rattus norvegicus (Rat).